The following is a 288-amino-acid chain: Alpha/beta hydrolase domain-containing protein 17B (288 aa).

Residues Ser-170, Asp-235, and His-264 each act as charge relay system in the active site.

The protein belongs to the AB hydrolase superfamily. ABHD17 family. In terms of processing, palmitoylated on cysteine residues located in a cysteine cluster at the N-terminus which promotes membrane localization.

Its subcellular location is the cell membrane. It is found in the recycling endosome membrane. The protein resides in the cell projection. It localises to the dendritic spine. The protein localises to the postsynaptic density membrane. It catalyses the reaction S-hexadecanoyl-L-cysteinyl-[protein] + H2O = L-cysteinyl-[protein] + hexadecanoate + H(+). In terms of biological role, hydrolyzes fatty acids from S-acylated cysteine residues in proteins. Has depalmitoylating activity towards NRAS. The protein is Alpha/beta hydrolase domain-containing protein 17B of Gallus gallus (Chicken).